The chain runs to 504 residues: Probable cytosol aminopeptidase (504 aa).

Lysine 274 and aspartate 279 together coordinate Mn(2+). The active site involves lysine 286. Aspartate 297, aspartate 356, and glutamate 358 together coordinate Mn(2+). Arginine 360 is an active-site residue.

This sequence belongs to the peptidase M17 family. It depends on Mn(2+) as a cofactor.

It is found in the cytoplasm. The catalysed reaction is Release of an N-terminal amino acid, Xaa-|-Yaa-, in which Xaa is preferably Leu, but may be other amino acids including Pro although not Arg or Lys, and Yaa may be Pro. Amino acid amides and methyl esters are also readily hydrolyzed, but rates on arylamides are exceedingly low.. It carries out the reaction Release of an N-terminal amino acid, preferentially leucine, but not glutamic or aspartic acids.. Functionally, presumably involved in the processing and regular turnover of intracellular proteins. Catalyzes the removal of unsubstituted N-terminal amino acids from various peptides. This Gloeobacter violaceus (strain ATCC 29082 / PCC 7421) protein is Probable cytosol aminopeptidase.